A 348-amino-acid chain; its full sequence is Chemokine C-C motif receptor-like 2 (348 aa).

Residues 1-43 (MANYTPAPEDDYDVFIEDDLSDDEIEPCTPYDPKILSAQLVPY) lie on the Extracellular side of the membrane. Residues 44-64 (LYTTVFMVGLLDNILVVFILV) traverse the membrane as a helical segment. Residues 65–76 (KYKGLRQAENMS) lie on the Cytoplasmic side of the membrane. Residues 77–97 (FLNLALSNLGFLLTLPFWAYA) traverse the membrane as a helical segment. Topologically, residues 98–110 (ASHGEGFDDPLCK) are extracellular. A disulfide bridge connects residues Cys109 and Cys187. Residues 111 to 131 (ILLLLYSIGLYSEAFFNVLLT) form a helical membrane-spanning segment. Over 132–150 (VQRYKEFFHVRRRFSACRT) the chain is Cytoplasmic. Residues 151–171 (VAGSIFISVLVWVTATLVTLP) traverse the membrane as a helical segment. Residues 172–204 (ELVSYKPQMQSQKYKCFFTGLHFLPADETFWKH) are Extracellular-facing. The helical transmembrane segment at 205–225 (FLTLKMNILGFLLPLFAFVYC) threads the bilayer. Residues 226–244 (YVRMRKTLQFRERNYGLFK) lie on the Cytoplasmic side of the membrane. A helical membrane pass occupies residues 245–265 (LVFTIMAVFLLMWGPYNIVLF). Residues 266 to 292 (LSAFNEHFSLHGCGSSYNLNKSVQITR) lie on the Extracellular side of the membrane. N-linked (GlcNAc...) asparagine glycosylation occurs at Asn285. Residues 293–313 (IIAATHCCVNPLLYVFLDKAF) form a helical membrane-spanning segment. The Cytoplasmic portion of the chain corresponds to 314-348 (RKHLCHLFYLCSDTAPQPTEEPAQGASGEEYHLSS).

This sequence belongs to the G-protein coupled receptor 1 family.

Its subcellular location is the cell membrane. Its function is as follows. Receptor for CCL19 and chemerin/RARRES2. Does not appear to be a signaling receptor, but may have a role in modulating chemokine-triggered immune responses by capturing and internalizing CCL19 or by presenting RARRES2 ligand to CMKLR1, a functional signaling receptor. Plays a critical role for the development of Th2 responses. This chain is Chemokine C-C motif receptor-like 2 (CCRL2), found in Bos taurus (Bovine).